Here is a 258-residue protein sequence, read N- to C-terminus: Phosphate import ATP-binding protein PstB (258 aa).

An ABC transporter domain is found at 12 to 253 (LEVKNLNFYY…PARKETEDYI (242 aa)). ATP is bound at residue 44 to 51 (GPSGCGKS).

It belongs to the ABC transporter superfamily. Phosphate importer (TC 3.A.1.7) family. The complex is composed of two ATP-binding proteins (PstB), two transmembrane proteins (PstC and PstA) and a solute-binding protein (PstS).

The protein localises to the cell inner membrane. The enzyme catalyses phosphate(out) + ATP + H2O = ADP + 2 phosphate(in) + H(+). Functionally, part of the ABC transporter complex PstSACB involved in phosphate import. Responsible for energy coupling to the transport system. The polypeptide is Phosphate import ATP-binding protein PstB (Bordetella pertussis (strain Tohama I / ATCC BAA-589 / NCTC 13251)).